Reading from the N-terminus, the 316-residue chain is Beta-ketoacyl-[acyl-carrier-protein] synthase III (316 aa).

Active-site residues include cysteine 112 and histidine 243. The interval 244 to 248 (QANLR) is ACP-binding. The active site involves asparagine 273.

The protein belongs to the thiolase-like superfamily. FabH family. Homodimer.

The protein resides in the cytoplasm. It catalyses the reaction malonyl-[ACP] + acetyl-CoA + H(+) = 3-oxobutanoyl-[ACP] + CO2 + CoA. It participates in lipid metabolism; fatty acid biosynthesis. In terms of biological role, catalyzes the condensation reaction of fatty acid synthesis by the addition to an acyl acceptor of two carbons from malonyl-ACP. Catalyzes the first condensation reaction which initiates fatty acid synthesis and may therefore play a role in governing the total rate of fatty acid production. Possesses both acetoacetyl-ACP synthase and acetyl transacylase activities. Its substrate specificity determines the biosynthesis of branched-chain and/or straight-chain of fatty acids. The protein is Beta-ketoacyl-[acyl-carrier-protein] synthase III of Yersinia pseudotuberculosis serotype O:1b (strain IP 31758).